The primary structure comprises 1155 residues: uncharacterized protein (1155 aa).

The first 19 residues, 1–19 (MNKNIFITLLISSLLLLSG), serve as a signal peptide directing secretion. Cys20 carries the N-palmitoyl cysteine lipid modification. A lipid anchor (S-diacylglycerol cysteine) is attached at Cys20. Transmembrane regions (helical) follow at residues 291 to 311 (VSAI…IGNI), 395 to 415 (LGFI…FLIF), 424 to 444 (ALIT…FMLF), and 459 to 479 (ISYA…SMII).

It belongs to the TrbL/VirB6 family.

Its subcellular location is the cell membrane. This is an uncharacterized protein from Rickettsia felis (strain ATCC VR-1525 / URRWXCal2) (Rickettsia azadi).